Consider the following 683-residue polypeptide: Bifunctional lysine-specific demethylase and histidyl-hydroxylase NO66 (683 aa).

Residues Met1–Asn26 are compositionally biased toward polar residues. Disordered regions lie at residues Met1–Gln162 and Ala179–Ser208. Basic and acidic residues predominate over residues Leu54–Met65. Positions Ile85–Lys94 are enriched in polar residues. Positions Gly95 to Arg108 are enriched in basic residues. Positions Pro116–Lys125 are enriched in low complexity. Ser152 is modified (phosphoserine). At Thr158 the chain carries Phosphothreonine. Ser159 carries the phosphoserine modification. Over residues Ala179 to Ala189 the composition is skewed to low complexity. The JmjC domain occupies Asn341–Val480. Fe cation is bound by residues His381, Asp383, and His446.

The protein belongs to the ROX family. NO66 subfamily. The cofactor is Fe(2+).

It is found in the nucleus. It carries out the reaction N(6),N(6)-dimethyl-L-lysyl(36)-[histone H3] + 2 2-oxoglutarate + 2 O2 = L-lysyl(36)-[histone H3] + 2 formaldehyde + 2 succinate + 2 CO2. Its function is as follows. Oxygenase that can act as both a histone lysine demethylase and a ribosomal histidine hydroxylase. Specifically demethylates 'Lys-4' (H3K4me) and 'Lys-36' (H3K36me) of histone H3, thereby playing a central role in histone code. This Drosophila yakuba (Fruit fly) protein is Bifunctional lysine-specific demethylase and histidyl-hydroxylase NO66.